The primary structure comprises 558 residues: Phosphatidylserine lipase ABHD16A (558 aa).

A run of 2 helical transmembrane segments spans residues 60-80 (ILAL…FAFF) and 93-113 (VVPF…VACL). Residues 114 to 558 (RGIGRWTNPQ…AQHFQMPWCL (445 aa)) lie on the Cytoplasmic side of the membrane. An AB hydrolase-1 domain is found at 281 to 407 (LVICCEGNAG…LVTRTVRQHL (127 aa)). Residues Ser-355, Asp-430, and His-507 each act as charge relay system in the active site.

The protein belongs to the AB hydrolase superfamily. ABHD16 family.

It localises to the membrane. It catalyses the reaction 1-heptadecanoyl-2-(5Z,8Z,11Z,14Z-eicosatetraenoyl)-sn-glycero-3-phosphoserine + H2O = 1-heptadecanoyl-sn-glycero-3-phosphoserine + (5Z,8Z,11Z,14Z)-eicosatetraenoate + H(+). The catalysed reaction is 1-hexadecanoyl-2-(9Z-octadecenoyl)-sn-glycero-3-phospho-L-serine + H2O = 1-hexadecanoyl-sn-glycero-3-phospho-L-serine + (9Z)-octadecenoate + H(+). It carries out the reaction 1-octadecanoyl-2-(9Z,12Z-octadecadienoyl)-sn-glycero-3-phosphoserine + H2O = 1-octadecanoyl-sn-glycero-3-phosphoserine + (9Z,12Z)-octadecadienoate + H(+). The enzyme catalyses 1-heptadecanoyl-2-(5Z,8Z,11Z,14Z-eicosatetraenoyl)-sn-glycero-3-phosphocholine + H2O = 1-heptadecanoyl-sn-glycero-3-phosphocholine + (5Z,8Z,11Z,14Z)-eicosatetraenoate + H(+). It catalyses the reaction 1-hexadecanoyl-2-(9Z-octadecenoyl)-sn-glycero-3-phosphoglycerol + H2O = 1-hexadecanoyl-sn-glycero-3-phosphoglycerol + (9Z)-octadecenoate + H(+). The catalysed reaction is 1-hexadecanoyl-2-(9Z-octadecenoyl)-sn-glycero-3-phospho-(1D-myo-inositol) + H2O = 1-hexadecanoyl-sn-glycero-3-phospho-(1D-myo-inositol) + (9Z)-octadecenoate + H(+). It carries out the reaction 1-heptadecanoyl-2-(5Z,8Z,11Z,14Z-eicosatetraenoyl)-sn-glycero-3-phosphoethanolamine + H2O = 1-heptadecanoyl-sn-glycero-3-phosphoethanolamine + (5Z,8Z,11Z,14Z)-eicosatetraenoate + H(+). The enzyme catalyses 1-hexadecanoyl-2-(9Z-octadecenoyl)-sn-glycero-3-phospho-(1'-sn-glycerol) + H2O = 1-hexadecanoyl-sn-glycero-3-phospho-(1'-sn-glycerol) + (9Z)-octadecenoate + H(+). It catalyses the reaction Hydrolyzes glycerol monoesters of long-chain fatty acids.. The catalysed reaction is 1-tetradecanoylglycerol + H2O = tetradecanoate + glycerol + H(+). It carries out the reaction 2-hexadecanoylglycerol + H2O = glycerol + hexadecanoate + H(+). The enzyme catalyses 1-(9Z-octadecenoyl)-glycerol + H2O = glycerol + (9Z)-octadecenoate + H(+). It catalyses the reaction 2-(9Z-octadecenoyl)-glycerol + H2O = glycerol + (9Z)-octadecenoate + H(+). The catalysed reaction is 2-(9Z,12Z-octadecadienoyl)-glycerol + H2O = (9Z,12Z)-octadecadienoate + glycerol + H(+). It carries out the reaction 1-(5Z,8Z,11Z,14Z-eicosatetraenoyl)-glycerol + H2O = glycerol + (5Z,8Z,11Z,14Z)-eicosatetraenoate + H(+). The enzyme catalyses 2-(5Z,8Z,11Z,14Z-eicosatetraenoyl)-glycerol + H2O = glycerol + (5Z,8Z,11Z,14Z)-eicosatetraenoate + H(+). It catalyses the reaction prostaglandin D2-1-glycerol ester + H2O = prostaglandin D2 + glycerol + H(+). The catalysed reaction is 2-glyceryl-15-deoxy-Delta(12,14)-prostaglandin J2 + H2O = 15-deoxy-Delta(12,14)-prostaglandin J2 + glycerol + H(+). It carries out the reaction 1-(9Z,12Z-octadecadienoyl)-glycerol + H2O = (9Z,12Z)-octadecadienoate + glycerol + H(+). Its function is as follows. Phosphatidylserine (PS) lipase that mediates the hydrolysis of phosphatidylserine to generate lysophosphatidylserine (LPS). LPS constitutes a class of signaling lipids that regulates immunological and neurological processes. Has no activity towards diacylglycerol, triacylglycerol or lysophosphatidylserine lipase. Also has monoacylglycerol lipase activity, with preference for 1-(9Z,12Z-octadecadienoyl)-glycerol (1-LG) and 2-glyceryl-15-deoxy-Delta(12,14)-prostaglandin J2 (15d-PGJ(2)-G). This is Phosphatidylserine lipase ABHD16A from Rattus norvegicus (Rat).